The primary structure comprises 56 residues: Small ribosomal subunit protein bS21 (56 aa).

Belongs to the bacterial ribosomal protein bS21 family.

The chain is Small ribosomal subunit protein bS21 from Synechococcus sp. (strain RCC307).